Consider the following 578-residue polypeptide: 2-succinyl-5-enolpyruvyl-6-hydroxy-3-cyclohexene-1-carboxylate synthase (578 aa).

The protein belongs to the TPP enzyme family. MenD subfamily. In terms of assembly, homodimer. Requires Mg(2+) as cofactor. It depends on Mn(2+) as a cofactor. Thiamine diphosphate is required as a cofactor.

The catalysed reaction is isochorismate + 2-oxoglutarate + H(+) = 5-enolpyruvoyl-6-hydroxy-2-succinyl-cyclohex-3-ene-1-carboxylate + CO2. It participates in quinol/quinone metabolism; 1,4-dihydroxy-2-naphthoate biosynthesis; 1,4-dihydroxy-2-naphthoate from chorismate: step 2/7. Its pathway is quinol/quinone metabolism; menaquinone biosynthesis. Functionally, catalyzes the thiamine diphosphate-dependent decarboxylation of 2-oxoglutarate and the subsequent addition of the resulting succinic semialdehyde-thiamine pyrophosphate anion to isochorismate to yield 2-succinyl-5-enolpyruvyl-6-hydroxy-3-cyclohexene-1-carboxylate (SEPHCHC). The sequence is that of 2-succinyl-5-enolpyruvyl-6-hydroxy-3-cyclohexene-1-carboxylate synthase from Prosthecochloris aestuarii (strain DSM 271 / SK 413).